The following is a 155-amino-acid chain: Cytochrome c-type biogenesis protein CcmE (155 aa).

Topologically, residues 1–8 are cytoplasmic; sequence MNPVRKRR. A helical; Signal-anchor for type II membrane protein membrane pass occupies residues 9–29; sequence LFIVLAILAGVGAAVALALSA. The Periplasmic segment spans residues 30–155; it reads LQQNINLFYT…YENGKPGGAQ (126 aa). Heme-binding residues include histidine 124 and tyrosine 128.

It belongs to the CcmE/CycJ family.

The protein localises to the cell inner membrane. Its function is as follows. Heme chaperone required for the biogenesis of c-type cytochromes. Transiently binds heme delivered by CcmC and transfers the heme to apo-cytochromes in a process facilitated by CcmF and CcmH. The polypeptide is Cytochrome c-type biogenesis protein CcmE (Azotobacter vinelandii (strain DJ / ATCC BAA-1303)).